A 249-amino-acid polypeptide reads, in one-letter code: Probable transcriptional regulatory protein HY04AAS1_0501 (249 aa).

This sequence belongs to the TACO1 family.

The protein localises to the cytoplasm. This is Probable transcriptional regulatory protein HY04AAS1_0501 from Hydrogenobaculum sp. (strain Y04AAS1).